The sequence spans 833 residues: Leucine--tRNA ligase (833 aa).

The 'HIGH' region signature appears at 41 to 52 (PYPSGAGLHVGH). The 'KMSKS' region signature appears at 610-614 (KMSKS). K613 contacts ATP.

It belongs to the class-I aminoacyl-tRNA synthetase family.

It is found in the cytoplasm. It catalyses the reaction tRNA(Leu) + L-leucine + ATP = L-leucyl-tRNA(Leu) + AMP + diphosphate. The chain is Leucine--tRNA ligase from Streptococcus pyogenes serotype M4 (strain MGAS10750).